The chain runs to 149 residues: Large ribosomal subunit protein bL9 (149 aa).

The protein belongs to the bacterial ribosomal protein bL9 family.

Binds to the 23S rRNA. The sequence is that of Large ribosomal subunit protein bL9 from Shewanella amazonensis (strain ATCC BAA-1098 / SB2B).